We begin with the raw amino-acid sequence, 462 residues long: Cysteine--tRNA ligase (462 aa).

A Zn(2+)-binding site is contributed by cysteine 28. The short motif at 30 to 40 is the 'HIGH' region element; that stretch reads MTVYDYCHLGH. The Zn(2+) site is built by cysteine 209, histidine 234, and glutamate 238. Residues 266–270 carry the 'KMSKS' region motif; sequence KMAKS. Lysine 269 contributes to the ATP binding site.

The protein belongs to the class-I aminoacyl-tRNA synthetase family. As to quaternary structure, monomer. Requires Zn(2+) as cofactor.

Its subcellular location is the cytoplasm. It catalyses the reaction tRNA(Cys) + L-cysteine + ATP = L-cysteinyl-tRNA(Cys) + AMP + diphosphate. In Alkalilimnicola ehrlichii (strain ATCC BAA-1101 / DSM 17681 / MLHE-1), this protein is Cysteine--tRNA ligase.